We begin with the raw amino-acid sequence, 164 residues long: MSGKREFKSFGSTEETMFSQHHKIPSTSEMYAEPENFLEIEVRNPKTHVPNGVDQRGMYTDYEIICRTNLPNFHKRASRVRRRYSDFEFFRKCLLKEISMLNNPRVVVPHLPGKIYLSNRFSDEVIEERRQGLNRWMQIVAGHPLLQSGSKTLIRFIEDDKFVG.

The segment at 1–26 (MSGKREFKSFGSTEETMFSQHHKIPS) is disordered. A compositionally biased stretch (polar residues) spans 10-26 (FGSTEETMFSQHHKIPS). Residues 40–163 (IEVRNPKTHV…IRFIEDDKFV (124 aa)) enclose the PX domain. A 1,2-diacyl-sn-glycero-3-phospho-(1D-myo-inositol-3-phosphate) contacts are provided by Arg83, Ser85, Lys114, Arg120, and Arg129.

This sequence belongs to the sorting nexin family.

Its subcellular location is the cytoplasm. The protein resides in the golgi apparatus membrane. It is found in the prevacuolar compartment membrane. In terms of biological role, required for retention of late Golgi membrane proteins. Component of the retrieval machinery that functions by direct interaction with the cytosolic tails of certain TGN membrane proteins during the sorting/budding process at the prevacuolar compartment. Binds phosphatidylinositol 3-phosphate (PtdIns(P3)). In Candida glabrata (strain ATCC 2001 / BCRC 20586 / JCM 3761 / NBRC 0622 / NRRL Y-65 / CBS 138) (Yeast), this protein is Sorting nexin-3 (SNX3).